The chain runs to 593 residues: Trehalose synthase/amylase TreS (593 aa).

Asp-90 provides a ligand contact to substrate. Residue Asn-132 participates in Ca(2+) binding. The substrate site is built by His-133 and Gln-198. Residue Asp-200 coordinates Ca(2+). Arg-228 serves as a coordination point for substrate. Residue Asp-230 is the Nucleophile of the active site. Ca(2+)-binding residues include Tyr-234, Leu-235, and Glu-237. Residue Glu-272 is the Proton donor of the active site. Residues His-341 and Asp-342 each contribute to the substrate site.

The protein belongs to the glycosyl hydrolase 13 family. TreS subfamily. In terms of assembly, homohexamer.

It carries out the reaction D-maltose = alpha,alpha-trehalose. It catalyses the reaction Endohydrolysis of (1-&gt;4)-alpha-D-glucosidic linkages in polysaccharides containing three or more (1-&gt;4)-alpha-linked D-glucose units.. It functions in the pathway glycan biosynthesis; glycogen biosynthesis. Its activity is regulated as follows. The amylase activity is stimulated by addition of Ca(2+), but this cation and other divalent cations inhibit the trehalose synthase activity. In addition, trehalose synthase activity, but not amylase activity, is strongly inhibited, and in a competitive manner, by validoxylamine. On the other hand, amylase, but not trehalose synthase activity, is inhibited by the known transition-state amylase inhibitor, acarbose, suggesting the possibility of two different active sites. Other metal ions such as Mg(2+), Mn(2+), and Co(2+) are also somewhat effective in the stimulation of amylase activity, but Hg(2+), Cu(2+), Ni(2+) and Zn(2+) are inhibitory. Functionally, catalyzes the reversible interconversion of maltose and trehalose by transglucosylation. Maltose is the preferred substrate. To a lesser extent, also displays amylase activity, catalyzing the endohydrolysis of (1-&gt;4)-alpha-D-glucosidic linkages in glycogen and maltooligosaccharides such as maltoheptaose, to produce maltose which then can be converted to trehalose. TreS plays a key role in the utilization of trehalose for the production of glycogen and alpha-glucan via the TreS-Pep2 branch involved in the biosynthesis of maltose-1-phosphate (M1P). Might also function as a sensor and/or regulator of trehalose levels within the cell. Thus, when trehalose levels in the cell become dangerously low, TreS can expedite the conversion of glycogen to maltose via its amylase activity and then convert the maltose to trehalose; but this enzyme also can expedite or promote the conversion of trehalose to glycogen when cytoplasmic trehalose levels become too high. Is also able to catalyze the hydrolytic cleavage of alpha-aryl glucosides, as well as alpha-glucosyl fluoride in vitro. The protein is Trehalose synthase/amylase TreS of Mycolicibacterium smegmatis (strain ATCC 700084 / mc(2)155) (Mycobacterium smegmatis).